A 779-amino-acid polypeptide reads, in one-letter code: MINHENNDLFDLNEALKVENLTLNDYEEICKRLKRKPNRTELGMFGVMWSEHCCYRNSKPLLSKFPTKGKNVLVGPGENAGVIDVGNNQKLVFKIESHNHPSAIEPFQGAATGVGGILRDIFTMGARPIAVLNSLRFGNLDKSSNVDLLRGVVSGIAHYGNCVGVPTVGGEIDFDDSYSGNPLVNVMALGLLETEEIVCSGAKNVGSPVLYVGNTTGRDGVGGASFASSELTTTSLDDRPAVQVGDPFIEKSLIEACLDAFKTGDVIAAQDMGAAGLTCSSAEMAANGNLGISIDLDLVPSREDDMSSYQYLLSESQERMLFVVKEEKISDLIEKFNKWGLYASVIGEVIGTNEVIISHKGNIVAQIPTSALSDDTPVNFHNVINNPPDDLLNKWEWKENDLPEINEQKIFSLKENKKFSFSEIILKLLSNPSIASKRWIYKQYDSQVQANTVFTPGKSDAAVVRLREQNKKSKNKVFSGVAASVDCNSRWVALDPFRGSIAAVAESARNVSCVGAEPVAITNNLNFSSPENEIGYWQLSSSCNGIAEACKALETPVTGGNVSLYNESKNKDNLITPINPTPVIGMVGKIDNVEKAISSEWKNIEDQIWLIGSYKSDTTTAASSYLEYFHGEITGRPPKIDLSDEKFCQSFLRNAILNSLVVSSHDISDGGLAIALAESCILSARGATIELEKDLNRVDNLLFAEGGSRIIFSISKMKQNEWFNYLKQNQINFPSSVYVKKIGYVSSDTLKIKINEKNICNIRVEELTEKFNNSISDYF.

Residue H52 is part of the active site. Residues Y55 and K94 each coordinate ATP. E96 provides a ligand contact to Mg(2+). Substrate is bound by residues 97–100 (SHNH) and R119. Residue H98 is the Proton acceptor of the active site. Residue D120 participates in Mg(2+) binding. Residue Q243 coordinates substrate. D271 is a Mg(2+) binding site. Residue 315 to 317 (ESQ) coordinates substrate. Positions 523 and 560 each coordinate ATP. Mg(2+) is bound at residue N561. S563 contacts substrate.

This sequence belongs to the FGAMS family. As to quaternary structure, monomer. Part of the FGAM synthase complex composed of 1 PurL, 1 PurQ and 2 PurS subunits.

The protein resides in the cytoplasm. The catalysed reaction is N(2)-formyl-N(1)-(5-phospho-beta-D-ribosyl)glycinamide + L-glutamine + ATP + H2O = 2-formamido-N(1)-(5-O-phospho-beta-D-ribosyl)acetamidine + L-glutamate + ADP + phosphate + H(+). Its pathway is purine metabolism; IMP biosynthesis via de novo pathway; 5-amino-1-(5-phospho-D-ribosyl)imidazole from N(2)-formyl-N(1)-(5-phospho-D-ribosyl)glycinamide: step 1/2. Functionally, part of the phosphoribosylformylglycinamidine synthase complex involved in the purines biosynthetic pathway. Catalyzes the ATP-dependent conversion of formylglycinamide ribonucleotide (FGAR) and glutamine to yield formylglycinamidine ribonucleotide (FGAM) and glutamate. The FGAM synthase complex is composed of three subunits. PurQ produces an ammonia molecule by converting glutamine to glutamate. PurL transfers the ammonia molecule to FGAR to form FGAM in an ATP-dependent manner. PurS interacts with PurQ and PurL and is thought to assist in the transfer of the ammonia molecule from PurQ to PurL. This is Phosphoribosylformylglycinamidine synthase subunit PurL from Prochlorococcus marinus (strain AS9601).